The sequence spans 229 residues: Cytochrome c oxidase subunit 2 (229 aa).

Residues 1 to 14 (MANPSQFGFQDASS) lie on the Mitochondrial intermembrane side of the membrane. A helical transmembrane segment spans residues 15 to 45 (PIMEELVEFHDHALMVALAICSLVLYLLALM). Topologically, residues 46–58 (LVEKLSSNTVDAQ) are mitochondrial matrix. The chain crosses the membrane as a helical span at residues 59–86 (EVELIWTILPAIVLILLALPSLQILYMM). Topologically, residues 87 to 229 (DEIDEPDLTL…SWSSLLSTDS (143 aa)) are mitochondrial intermembrane. Residues H160, C195, E197, C199, H203, and M206 each contribute to the Cu cation site. Mg(2+) is bound at residue E197.

The protein belongs to the cytochrome c oxidase subunit 2 family. In terms of assembly, component of the cytochrome c oxidase (complex IV, CIV), a multisubunit enzyme composed of 14 subunits. The complex is composed of a catalytic core of 3 subunits MT-CO1, MT-CO2 and MT-CO3, encoded in the mitochondrial DNA, and 11 supernumerary subunits COX4I, COX5A, COX5B, COX6A, COX6B, COX6C, COX7A, COX7B, COX7C, COX8 and NDUFA4, which are encoded in the nuclear genome. The complex exists as a monomer or a dimer and forms supercomplexes (SCs) in the inner mitochondrial membrane with NADH-ubiquinone oxidoreductase (complex I, CI) and ubiquinol-cytochrome c oxidoreductase (cytochrome b-c1 complex, complex III, CIII), resulting in different assemblies (supercomplex SCI(1)III(2)IV(1) and megacomplex MCI(2)III(2)IV(2)). Found in a complex with TMEM177, COA6, COX18, COX20, SCO1 and SCO2. Interacts with TMEM177 in a COX20-dependent manner. Interacts with COX20. Interacts with COX16. Cu cation serves as cofactor.

Its subcellular location is the mitochondrion inner membrane. The enzyme catalyses 4 Fe(II)-[cytochrome c] + O2 + 8 H(+)(in) = 4 Fe(III)-[cytochrome c] + 2 H2O + 4 H(+)(out). Its function is as follows. Component of the cytochrome c oxidase, the last enzyme in the mitochondrial electron transport chain which drives oxidative phosphorylation. The respiratory chain contains 3 multisubunit complexes succinate dehydrogenase (complex II, CII), ubiquinol-cytochrome c oxidoreductase (cytochrome b-c1 complex, complex III, CIII) and cytochrome c oxidase (complex IV, CIV), that cooperate to transfer electrons derived from NADH and succinate to molecular oxygen, creating an electrochemical gradient over the inner membrane that drives transmembrane transport and the ATP synthase. Cytochrome c oxidase is the component of the respiratory chain that catalyzes the reduction of oxygen to water. Electrons originating from reduced cytochrome c in the intermembrane space (IMS) are transferred via the dinuclear copper A center (CU(A)) of subunit 2 and heme A of subunit 1 to the active site in subunit 1, a binuclear center (BNC) formed by heme A3 and copper B (CU(B)). The BNC reduces molecular oxygen to 2 water molecules using 4 electrons from cytochrome c in the IMS and 4 protons from the mitochondrial matrix. This chain is Cytochrome c oxidase subunit 2 (MT-CO2), found in Struthio camelus (Common ostrich).